A 56-amino-acid chain; its full sequence is U-megalopygitoxin(2)-Mo9 (56 aa).

The first 25 residues, 1–25, serve as a signal peptide directing secretion; it reads MKFIVLLLIVTSVLMMFAVTTEASP. Q26 carries the pyrrolidone carboxylic acid modification. T55 carries the threonine amide modification.

It belongs to the caterpillar 2 family. Contains 2 disulfide bonds. As to expression, expressed by the venom apparatus.

The protein resides in the secreted. Functionally, probable toxin. In Megalopyge opercularis (Southern flannel moth), this protein is U-megalopygitoxin(2)-Mo9.